The chain runs to 694 residues: Lamina-associated polypeptide 2, isoform alpha (694 aa).

One can recognise an LEM-like domain in the interval 5–48 (LEDPSVLTKDKLKSELVANNVTLPAGEQRKDVYVQLYLQHLTAR). Disordered regions lie at residues 47–117 (ARNR…ELTN) and 150–209 (REQG…FSEL). The interval 49–108 (NRPPLPAGTNSKGPPDFSSDEEREPTPVLGSGAAAAGRSRAAVGRKATKKTDKPRQEDKD) is linker. Threonine 57 is subject to Phosphothreonine. A phosphoserine mark is found at serine 59, serine 66, and serine 67. The residue at position 74 (threonine 74) is a Phosphothreonine. Residues 78–93 (GSGAAAAGRSRAAVGR) show a composition bias toward low complexity. At serine 79 the chain carries Phosphoserine. 2 positions are modified to omega-N-methylarginine: arginine 86 and arginine 88. A compositionally biased stretch (basic and acidic residues) spans 97 to 106 (KKTDKPRQED). A compositionally biased stretch (acidic residues) spans 107–117 (KDDLDVTELTN). Positions 109–153 (DLDVTELTNEDLLDQLVKYGVNPGPIVGTTRKLYEKKLLKLREQG) constitute an LEM domain. A Phosphothreonine modification is found at threonine 154. A compositionally biased stretch (polar residues) spans 155–178 (ESRSSTPLPTISSSAENTRQNGSN). Residues serine 156 and serine 159 each carry the phosphoserine modification. A phosphothreonine mark is found at threonine 160 and threonine 164. Phosphoserine is present on residues serine 166 and serine 168. Residues 179–191 (DSDRYSDNEEGKK) are compositionally biased toward basic and acidic residues. A Nuclear localization signal motif is present at residues 190–196 (KKKEHKK). Serine 272, serine 312, serine 351, serine 354, serine 370, and serine 424 each carry phosphoserine. The interval 338–368 (QPLCPERSHISDQSPLSSKRKALEESESSQL) is disordered. Residues 558–657 (TESCNQQLDL…VGRRYLWLKD (100 aa)) adopt a coiled-coil conformation. Lysine 656 is subject to N6-acetyllysine.

This sequence belongs to the LEM family. In terms of assembly, interacts with LMNA, BANF1 and RB1 and with chromosomes. Associates directly or indirectly with lamins at specific cell-cycle stages. Interacts with CMTM6. In terms of processing, phosphorylated in a mitose-specific manner. In terms of tissue distribution, expressed in many tissues. Most abundant in adult thymus and fetal liver.

It is found in the nucleus. The protein resides in the chromosome. May be involved in the structural organization of the nucleus and in the post-mitotic nuclear assembly. Plays an important role, together with LMNA, in the nuclear anchorage of RB1. In terms of biological role, TP and TP5 may play a role in T-cell development and function. TP5 is an immunomodulating pentapeptide. The chain is Lamina-associated polypeptide 2, isoform alpha (TMPO) from Homo sapiens (Human).